Here is a 300-residue protein sequence, read N- to C-terminus: MAVVTMKQLLDSGTHFGHQTRRWNPKMKRFIFTDRNGIYIIDLQQTLTYIDKAYEFVKETVAHGGTVLFVGTKKQAQESIAAEATRVGMPYVNQRWLGGMLTNFTTVHKRLLRLKELEAMEQTGGFEGRTKKEILMLTREMTKLDRTLGGIRDMAKVPSAVWVVDTNKEHLAVAEARKLNIPVIAILDTNCDPDLVDYPIPGNDDAIRSAALLTKVVASAVAEGVQARAGLSADKDAKPEAGAGEPLAEWEQELLSQAAPAAEAAPAAEAAPAAEAAPAAEAQAAPAAEAPAAEAPSTEA.

The interval 228–300 (RAGLSADKDA…PAAEAPSTEA (73 aa)) is disordered. The span at 258 to 300 (AAPAAEAAPAAEAAPAAEAAPAAEAQAAPAAEAPAAEAPSTEA) shows a compositional bias: low complexity.

The protein belongs to the universal ribosomal protein uS2 family.

The sequence is that of Small ribosomal subunit protein uS2 from Rhodococcus jostii (strain RHA1).